Consider the following 87-residue polypeptide: Envelope glycoprotein N (87 aa).

Positions 1 to 24 (MGSITASFILITMQILFFCEDSSG) are cleaved as a signal peptide. Residues 25 to 48 (EPNFAERNFWHASCSARGVYIDGS) lie on the Virion surface side of the membrane. The chain crosses the membrane as a helical span at residues 49 to 69 (MITTLFFYASLLGVCVALISL). Topologically, residues 70–87 (AYHACFRLFTRSVLRSTW) are intravirion.

It belongs to the herpesviridae glycoprotein N family. In terms of assembly, interacts (via N-terminus) with gM (via N-terminus). The gM-gN heterodimer forms the gCII complex.

It localises to the virion membrane. The protein resides in the host membrane. The protein localises to the host Golgi apparatus. Its subcellular location is the host trans-Golgi network. Its function is as follows. Envelope glycoprotein necessary for proper maturation of gM and modulation of its membrane fusion activity. Also plays a critical role in virion morphogenesis. This is Envelope glycoprotein N from Varicella-zoster virus (strain Dumas) (HHV-3).